Reading from the N-terminus, the 123-residue chain is Large ribosomal subunit protein uL29 (123 aa).

Lys19 carries the post-translational modification N6-acetyllysine. Lys25 participates in a covalent cross-link: Glycyl lysine isopeptide (Lys-Gly) (interchain with G-Cter in SUMO2). Ser29 carries the phosphoserine modification. Residue Lys43 is modified to N6-acetyllysine. The tract at residues 100–123 is disordered; it reads EKLKTKKQQRKERLYPLRKYAVKA.

The protein belongs to the universal ribosomal protein uL29 family. As to quaternary structure, component of the large ribosomal subunit.

The protein localises to the cytoplasm. Its function is as follows. Component of the large ribosomal subunit. The ribosome is a large ribonucleoprotein complex responsible for the synthesis of proteins in the cell. The sequence is that of Large ribosomal subunit protein uL29 (Rpl35) from Mus musculus (Mouse).